Here is a 386-residue protein sequence, read N- to C-terminus: Tumor necrosis factor receptor superfamily member 10D (386 aa).

2 disordered regions span residues 1–25 (MGLW…ARTA) and 62–90 (DEVP…SHRS). An N-terminal signal peptide occupies residues 1–55 (MGLWGQSVPTASSARAGRYPGARTASGTRPWLLDPKILKFVVFIVAVLLPVRVDS). Residues 56-211 (ATIPRQDEVP…ILGMLASPYH (156 aa)) are Extracellular-facing. TNFR-Cys repeat units follow at residues 58–97 (IPRQ…GACN), 98–139 (PCTE…DTVC), and 140–180 (QCEK…DIKC). Positions 64-75 (VPQQTVAPQQQR) are enriched in polar residues. Cystine bridges form between cysteine 83-cysteine 96, cysteine 99-cysteine 115, cysteine 118-cysteine 131, cysteine 121-cysteine 139, cysteine 141-cysteine 155, cysteine 158-cysteine 172, and cysteine 162-cysteine 180. An N-linked (GlcNAc...) asparagine glycan is attached at asparagine 127. Asparagine 182 is a glycosylation site (N-linked (GlcNAc...) asparagine). The helical transmembrane segment at 212–232 (YLIIIVVLVIILAVVVVGFSC) threads the bilayer. Residues 233-386 (RKKFISYLKG…DEAGSATSCL (154 aa)) are Cytoplasmic-facing. Residues 340–366 (SADISTLLDASATLEEGHAKETIQDQL) form the Death; truncated domain.

In terms of tissue distribution, widely expressed, in particular in fetal kidney, lung and liver, and in adult testis and liver. Also expressed in peripheral blood leukocytes, colon and small intestine, ovary, prostate, thymus, spleen, pancreas, kidney, lung, placenta and heart.

Its subcellular location is the membrane. Functionally, receptor for the cytotoxic ligand TRAIL. Contains a truncated death domain and hence is not capable of inducing apoptosis but protects against TRAIL-mediated apoptosis. Reports are contradictory with regards to its ability to induce the NF-kappa-B pathway. According to PubMed:9382840, it cannot but according to PubMed:9430226, it can induce the NF-kappa-B pathway. This Homo sapiens (Human) protein is Tumor necrosis factor receptor superfamily member 10D.